A 141-amino-acid polypeptide reads, in one-letter code: Large ribosomal subunit protein uL11 (141 aa).

Belongs to the universal ribosomal protein uL11 family. As to quaternary structure, part of the ribosomal stalk of the 50S ribosomal subunit. Interacts with L10 and the large rRNA to form the base of the stalk. L10 forms an elongated spine to which L12 dimers bind in a sequential fashion forming a multimeric L10(L12)X complex. Post-translationally, one or more lysine residues are methylated.

Forms part of the ribosomal stalk which helps the ribosome interact with GTP-bound translation factors. This Lactobacillus delbrueckii subsp. bulgaricus (strain ATCC 11842 / DSM 20081 / BCRC 10696 / JCM 1002 / NBRC 13953 / NCIMB 11778 / NCTC 12712 / WDCM 00102 / Lb 14) protein is Large ribosomal subunit protein uL11.